The chain runs to 431 residues: 3-phosphoshikimate 1-carboxyvinyltransferase (431 aa).

Residues Lys-26, Ser-27, and Arg-31 each contribute to the 3-phosphoshikimate site. Residue Lys-26 participates in phosphoenolpyruvate binding. Residues Gly-100 and Arg-129 each coordinate phosphoenolpyruvate. Residues Ser-175, Ser-176, Gln-177, Asp-308, and Gln-335 each coordinate 3-phosphoshikimate. Gln-177 contacts phosphoenolpyruvate. The Proton acceptor role is filled by Asp-308. Arg-339, Arg-381, and Lys-412 together coordinate phosphoenolpyruvate.

It belongs to the EPSP synthase family. In terms of assembly, monomer.

It localises to the cytoplasm. The enzyme catalyses 3-phosphoshikimate + phosphoenolpyruvate = 5-O-(1-carboxyvinyl)-3-phosphoshikimate + phosphate. It participates in metabolic intermediate biosynthesis; chorismate biosynthesis; chorismate from D-erythrose 4-phosphate and phosphoenolpyruvate: step 6/7. In terms of biological role, catalyzes the transfer of the enolpyruvyl moiety of phosphoenolpyruvate (PEP) to the 5-hydroxyl of shikimate-3-phosphate (S3P) to produce enolpyruvyl shikimate-3-phosphate and inorganic phosphate. The chain is 3-phosphoshikimate 1-carboxyvinyltransferase from Opitutus terrae (strain DSM 11246 / JCM 15787 / PB90-1).